The following is a 190-amino-acid chain: Casparian strip membrane protein 1 (190 aa).

Residues Met-1–Gly-24 lie on the Cytoplasmic side of the membrane. A helical transmembrane segment spans residues Leu-25 to Ile-45. Residues Ala-46–Ala-72 lie on the Extracellular side of the membrane. Residues Asn-51 and Asn-69 are each glycosylated (N-linked (GlcNAc...) asparagine). A helical transmembrane segment spans residues Phe-73–Phe-93. Over Ser-94–Arg-107 the chain is Cytoplasmic. Residues Val-108 to Ala-128 traverse the membrane as a helical segment. Over Thr-129–Gln-157 the chain is Extracellular. Residues Ala-158 to Leu-178 traverse the membrane as a helical segment. Residues Ser-179–Phe-190 are Cytoplasmic-facing.

The protein belongs to the Casparian strip membrane proteins (CASP) family. Homodimer and heterodimers.

It is found in the cell membrane. Regulates membrane-cell wall junctions and localized cell wall deposition. Required for establishment of the Casparian strip membrane domain (CSD) and the subsequent formation of Casparian strips, a cell wall modification of the root endodermis that determines an apoplastic barrier between the intraorganismal apoplasm and the extraorganismal apoplasm and prevents lateral diffusion. This Pinus taeda (Loblolly pine) protein is Casparian strip membrane protein 1.